The sequence spans 504 residues: Glucose-6-phosphate isomerase (504 aa).

Residue Glu333 is the Proton donor of the active site. Active-site residues include His364 and Lys473.

This sequence belongs to the GPI family.

It is found in the cytoplasm. It catalyses the reaction alpha-D-glucose 6-phosphate = beta-D-fructose 6-phosphate. The protein operates within carbohydrate biosynthesis; gluconeogenesis. Its pathway is carbohydrate degradation; glycolysis; D-glyceraldehyde 3-phosphate and glycerone phosphate from D-glucose: step 2/4. Its function is as follows. Catalyzes the reversible isomerization of glucose-6-phosphate to fructose-6-phosphate. The sequence is that of Glucose-6-phosphate isomerase from Xanthomonas campestris pv. campestris (strain B100).